The chain runs to 976 residues: DNA-directed RNA polymerase 1, mitochondrial (976 aa).

Residues 1–42 (MWRNILGRASLRKVKFLSDSSSSGTHYPVNRVRGILSSVNLS) constitute a mitochondrion transit peptide. Active-site residues include D677, K752, and D909.

The protein belongs to the phage and mitochondrial RNA polymerase family.

Its subcellular location is the mitochondrion. The enzyme catalyses RNA(n) + a ribonucleoside 5'-triphosphate = RNA(n+1) + diphosphate. In terms of biological role, DNA-dependent RNA polymerase catalyzes the transcription of DNA into RNA using the four ribonucleoside triphosphates as substrates. The chain is DNA-directed RNA polymerase 1, mitochondrial (RPOT1) from Arabidopsis thaliana (Mouse-ear cress).